The sequence spans 388 residues: Dual-specificity RNA methyltransferase RlmN (388 aa).

Glutamate 109 functions as the Proton acceptor in the catalytic mechanism. The region spanning 115–354 is the Radical SAM core domain; sequence EEDRATLCVS…TIVRKTRGDD (240 aa). Cysteine 122 and cysteine 359 form a disulfide bridge. Cysteine 129, cysteine 133, and cysteine 136 together coordinate [4Fe-4S] cluster. Residues 183–184, serine 215, 237–239, and asparagine 316 contribute to the S-adenosyl-L-methionine site; these read GE and SLH. The active-site S-methylcysteine intermediate is the cysteine 359.

This sequence belongs to the radical SAM superfamily. RlmN family. [4Fe-4S] cluster serves as cofactor.

It localises to the cytoplasm. The catalysed reaction is adenosine(2503) in 23S rRNA + 2 reduced [2Fe-2S]-[ferredoxin] + 2 S-adenosyl-L-methionine = 2-methyladenosine(2503) in 23S rRNA + 5'-deoxyadenosine + L-methionine + 2 oxidized [2Fe-2S]-[ferredoxin] + S-adenosyl-L-homocysteine. It carries out the reaction adenosine(37) in tRNA + 2 reduced [2Fe-2S]-[ferredoxin] + 2 S-adenosyl-L-methionine = 2-methyladenosine(37) in tRNA + 5'-deoxyadenosine + L-methionine + 2 oxidized [2Fe-2S]-[ferredoxin] + S-adenosyl-L-homocysteine. Specifically methylates position 2 of adenine 2503 in 23S rRNA and position 2 of adenine 37 in tRNAs. m2A2503 modification seems to play a crucial role in the proofreading step occurring at the peptidyl transferase center and thus would serve to optimize ribosomal fidelity. This Klebsiella pneumoniae subsp. pneumoniae (strain ATCC 700721 / MGH 78578) protein is Dual-specificity RNA methyltransferase RlmN.